The following is a 188-amino-acid chain: GTPase KRas (188 aa).

GTP-binding positions include glycine 10–alanine 18, valine 29–threonine 35, alanine 59–glycine 60, and asparagine 116–aspartate 119. The Effector region signature appears at tyrosine 32 to tyrosine 40. The tract at residues lysine 167–methionine 188 is disordered. Residue cysteine 185 is modified to Cysteine methyl ester. Cysteine 185 is lipidated: S-farnesyl cysteine. Residues isoleucine 186–methionine 188 constitute a propeptide, removed in mature form.

The protein belongs to the small GTPase superfamily. Ras family.

The protein localises to the cell membrane. The protein resides in the cytoplasm. The enzyme catalyses GTP + H2O = GDP + phosphate + H(+). Its activity is regulated as follows. Alternates between an inactive form bound to GDP and an active form bound to GTP. Activated by a guanine nucleotide-exchange factor (GEF) and inactivated by a GTPase-activating protein (GAP). In terms of biological role, ras proteins bind GDP/GTP and possess intrinsic GTPase activity. Plays an important role in the regulation of cell proliferation. May play a role in promoting oncogenic events by inducing transcriptional silencing of tumor suppressor genes (TSGs). This chain is GTPase KRas (kras), found in Kryptolebias marmoratus (Mangrove killifish).